The chain runs to 2604 residues: BEACH domain-containing protein B (2604 aa).

The region spanning 1761–1912 (VGTSEVLTSV…NAKEVGMLIV (152 aa)) is the BEACH-type PH domain. A BEACH domain is found at 1936–2226 (DRRIAMEMAE…QIFRKKHPRR (291 aa)). WD repeat units lie at residues 2254–2293 (HSPSAVLYVGVVDSNIVLVNQGLTLSVKIWLTTQLHSGGN), 2368–2407 (HHKDVVSCVAVTADSTILATGSYDTTVMVWDILRMRTPEK), 2433–2474 (GHDD…RSLK), 2476–2515 (PSGSAVSKLAASHHGRIVLYGDDDLSLHLYSINGKHLASS), 2516–2557 (ESNG…KRYN), and 2558–2596 (GAGKIITSLTVTQEECFLAGTKDGALLVYSIENPQHRKP).

May be involved in the suppression of BCHC1 activity. This is BEACH domain-containing protein B from Arabidopsis thaliana (Mouse-ear cress).